We begin with the raw amino-acid sequence, 489 residues long: Glutamyl-tRNA(Gln) amidotransferase subunit A (489 aa).

Catalysis depends on charge relay system residues Lys80 and Ser160. The active-site Acyl-ester intermediate is the Ser184.

The protein belongs to the amidase family. GatA subfamily. In terms of assembly, heterotrimer of A, B and C subunits.

It catalyses the reaction L-glutamyl-tRNA(Gln) + L-glutamine + ATP + H2O = L-glutaminyl-tRNA(Gln) + L-glutamate + ADP + phosphate + H(+). Functionally, allows the formation of correctly charged Gln-tRNA(Gln) through the transamidation of misacylated Glu-tRNA(Gln) in organisms which lack glutaminyl-tRNA synthetase. The reaction takes place in the presence of glutamine and ATP through an activated gamma-phospho-Glu-tRNA(Gln). This is Glutamyl-tRNA(Gln) amidotransferase subunit A from Wolbachia pipientis wMel.